Reading from the N-terminus, the 343-residue chain is MAEKKGPEAKKQKKMKNKSKVEETDAGEEAGASEEQQQVTRLPPAFSLSEIKNKQRRQFMFIKLKQEKRKEKLILRKKRKKEREALGDKAPPKPVPKTIENQRVYDETTVDPADEEVALDEATDEFAPYFNKQTTPKILITTSDRPRGRSVRFTEQLSSIIPNSDVYYRRGLALKKIIPQCVSRDYTDLLVINEDRKVPNGLVLCHLPDGPTAHFKISNVRLRKEMKRKGKEPTEHKPEVILNNFTTRLGHSIGRMFASLYPHDPHFVGRQVATFHNQRDYIFFRYHRYLFKSEKKVGIQELGPRFTLKLRSLQKGTFDSKYGEYEWVHKRHEMDTSRRKFHL.

Basic and acidic residues-rich tracts occupy residues 1–10 and 82–91; these read MAEKKGPEAK and EREALGDKAP. 2 disordered regions span residues 1–51 and 77–97; these read MAEK…LSEI and KKRK…PVPK. The region spanning 136 to 319 is the Brix domain; sequence PKILITTSDR…LRSLQKGTFD (184 aa). An RNA-binding region spans residues 297–314; the sequence is VGIQELGPRFTLKLRSLQ.

It is found in the nucleus. It localises to the nucleolus. In terms of biological role, may be required for ribosome biogenesis. This is Ribosome production factor 1 (rpf1) from Xenopus laevis (African clawed frog).